Consider the following 1055-residue polypeptide: Elongation factor 3 (1055 aa).

An ADP-binding site is contributed by valine 45. HEAT repeat units follow at residues 45–86 (VEFF…NGAA), 96–133 (SAENTPFPALLEAFADKVAAVKTAAIAAVKAIVQSMNP), 135–172 (ASFVLLPALLNLIRTSGKWQIKAGSLEILQQLITSAPY), 175–213 (GEAMPDLVPVLAGAVWDTKSDVKKAAKATLEKAVSLVEN), 217–255 (EKFVPALVKSLLNPIEEVPKTISLLSATTFVSEVTAPTI), 257–290 (LIAPLLIRGLDERPTATKRKVCVIADNMSKLVDS), and 295–337 (RPFL…VPVE). ABC transporter domains are found at residues 447-659 (CNIE…SYYQ) and 687-1004 (LKMR…KKAG). ADP is bound by residues asparagine 723, glutamate 933, asparagine 936, and histidine 962. Disordered regions lie at residues 987–1006 (HNWVEGQGSGERIDKKAGDD) and 1024–1055 (EKKLSAADKRKAKKDRMARRKRGEEVFSDEEL). The span at 1033-1044 (RKAKKDRMARRK) shows a compositional bias: basic residues.

This sequence belongs to the ABC transporter superfamily. ABCF family. EF3 subfamily. As to quaternary structure, associates with ribosomes.

It localises to the cytoplasm. The protein resides in the cytosol. The enzyme catalyses ATP + H2O = ADP + phosphate + H(+). It participates in protein biosynthesis; polypeptide chain elongation. In terms of biological role, ribosome-dependent ATPase that functions in cytoplasmic translation elongation. Required for the ATP-dependent release of deacylated tRNA from the ribosomal E-site during protein biosynthesis. Stimulates the eEF1A-dependent binding of aminoacyl-tRNA to the ribosomal A-site, which has reduced affinity for tRNA as long as the E-site is occupied. Assists translation termination by stimulating the release of nascent protein from the ribosome by release factors. Appears to target calcium-channel protein CCH1 to the plasma membrane. The polypeptide is Elongation factor 3 (Cryptococcus neoformans var. neoformans serotype D (strain JEC21 / ATCC MYA-565) (Filobasidiella neoformans)).